The primary structure comprises 181 residues: NADH-quinone oxidoreductase subunit I (181 aa).

4Fe-4S ferredoxin-type domains follow at residues Leu44–Ala74 and Arg90–Asp119. 8 residues coordinate [4Fe-4S] cluster: Cys54, Cys57, Cys60, Cys64, Cys99, Cys102, Cys105, and Cys109.

This sequence belongs to the complex I 23 kDa subunit family. In terms of assembly, NDH-1 is composed of 14 different subunits. Subunits NuoA, H, J, K, L, M, N constitute the membrane sector of the complex. [4Fe-4S] cluster serves as cofactor.

The protein resides in the cell membrane. It carries out the reaction a quinone + NADH + 5 H(+)(in) = a quinol + NAD(+) + 4 H(+)(out). Its function is as follows. NDH-1 shuttles electrons from NADH, via FMN and iron-sulfur (Fe-S) centers, to quinones in the respiratory chain. The immediate electron acceptor for the enzyme in this species is believed to be menaquinone. Couples the redox reaction to proton translocation (for every two electrons transferred, four hydrogen ions are translocated across the cytoplasmic membrane), and thus conserves the redox energy in a proton gradient. The protein is NADH-quinone oxidoreductase subunit I of Mycobacterium marinum (strain ATCC BAA-535 / M).